The sequence spans 214 residues: Large ribosomal subunit protein bL25 (214 aa).

The segment at Ala187–Lys214 is disordered. Residues Glu200–Lys214 show a composition bias toward basic and acidic residues.

Belongs to the bacterial ribosomal protein bL25 family. CTC subfamily. Part of the 50S ribosomal subunit; part of the 5S rRNA/L5/L18/L25 subcomplex. Contacts the 5S rRNA. Binds to the 5S rRNA independently of L5 and L18.

Functionally, this is one of the proteins that binds to the 5S RNA in the ribosome where it forms part of the central protuberance. The chain is Large ribosomal subunit protein bL25 from Thermodesulfovibrio yellowstonii (strain ATCC 51303 / DSM 11347 / YP87).